The primary structure comprises 592 residues: Bifunctional purine biosynthesis protein ATIC (592 aa).

At Met-1 the chain carries N-acetylmethionine. Residues 1 to 146 enclose the MGS-like domain; the sequence is MAPGHLALFS…KNHARVTVVC (146 aa). The interval 1–198 is IMP cyclohydrolase; it reads MAPGHLALFS…ISDYFRKQYS (198 aa). IMP is bound by residues 12-14, 34-37, 64-67, 101-102, and 125-126; these read SDK, SGGT, RVKT, CN, and DI. Lys-137 serves as the catalytic Proton donor/acceptor; for FAICAR cyclization activity. The residue at position 199 (Lys-199) is an N6-acetyllysine. The tract at residues 199 to 592 is AICAR formyltransferase; it reads KGISQMPLRY…AHTNLRLFHH (394 aa). 5-amino-1-(5-phospho-beta-D-ribosyl)imidazole-4-carboxamide is bound by residues 207-208, His-267, Gly-316, Asp-339, Asn-431, and Arg-451; that span reads RY. The Proton acceptor; for AICAR formyltransferase activity role is filled by His-267. Ile-452 contacts (6R)-10-formyltetrahydrofolate. Phe-541 serves as a coordination point for 5-amino-1-(5-phospho-beta-D-ribosyl)imidazole-4-carboxamide. Residues Asp-546 and 565-566 each bind (6R)-10-formyltetrahydrofolate; that span reads SA. Position 588 (Arg-588) interacts with 5-amino-1-(5-phospho-beta-D-ribosyl)imidazole-4-carboxamide.

The protein belongs to the PurH family. As to quaternary structure, homodimer. Associates with internalized INSR complexes on Golgi/endosomal membranes. Interacts with INSR; ATIC together with PRKAA2/AMPK2 and HACD3/PTPLAD1 is proposed to be part of a signaling network regulating INSR autophosphorylation and endocytosis.

It localises to the cytoplasm. It is found in the cytosol. The catalysed reaction is (6R)-10-formyltetrahydrofolate + 5-amino-1-(5-phospho-beta-D-ribosyl)imidazole-4-carboxamide = 5-formamido-1-(5-phospho-D-ribosyl)imidazole-4-carboxamide + (6S)-5,6,7,8-tetrahydrofolate. It carries out the reaction 10-formyldihydrofolate + 5-amino-1-(5-phospho-beta-D-ribosyl)imidazole-4-carboxamide = 5-formamido-1-(5-phospho-D-ribosyl)imidazole-4-carboxamide + 7,8-dihydrofolate. The enzyme catalyses IMP + H2O = 5-formamido-1-(5-phospho-D-ribosyl)imidazole-4-carboxamide. Its pathway is purine metabolism; IMP biosynthesis via de novo pathway; 5-formamido-1-(5-phospho-D-ribosyl)imidazole-4-carboxamide from 5-amino-1-(5-phospho-D-ribosyl)imidazole-4-carboxamide (10-formyl THF route): step 1/1. It functions in the pathway purine metabolism; IMP biosynthesis via de novo pathway; IMP from 5-formamido-1-(5-phospho-D-ribosyl)imidazole-4-carboxamide: step 1/1. Its activity is regulated as follows. AMP and XMP inhibit AICAR formyltransferase activity. Bifunctional enzyme that catalyzes the last two steps of purine biosynthesis. Acts as a transformylase that incorporates a formyl group to the AMP analog AICAR (5-amino-1-(5-phospho-beta-D-ribosyl)imidazole-4-carboxamide) to produce the intermediate formyl-AICAR (FAICAR). Can use both 10-formyldihydrofolate and 10-formyltetrahydrofolate as the formyl donor in this reaction. Also catalyzes the cyclization of FAICAR to inosine monophosphate (IMP). Promotes insulin receptor/INSR autophosphorylation and is involved in INSR internalization. This is Bifunctional purine biosynthesis protein ATIC (ATIC) from Pongo abelii (Sumatran orangutan).